The sequence spans 194 residues: FMN-dependent NADH:quinone oxidoreductase (194 aa).

FMN-binding positions include serine 10 and 90 to 93 (MYNL).

The protein belongs to the azoreductase type 1 family. As to quaternary structure, homodimer. The cofactor is FMN.

It catalyses the reaction 2 a quinone + NADH + H(+) = 2 a 1,4-benzosemiquinone + NAD(+). The enzyme catalyses N,N-dimethyl-1,4-phenylenediamine + anthranilate + 2 NAD(+) = 2-(4-dimethylaminophenyl)diazenylbenzoate + 2 NADH + 2 H(+). In terms of biological role, quinone reductase that provides resistance to thiol-specific stress caused by electrophilic quinones. Also exhibits azoreductase activity. Catalyzes the reductive cleavage of the azo bond in aromatic azo compounds to the corresponding amines. This is FMN-dependent NADH:quinone oxidoreductase from Haemophilus influenzae (strain PittEE).